The chain runs to 116 residues: MHHLIQEITKEQLRTDLPDFRPGDTVRVHVKVVEGNRERIQVFEGVVIKRRGAGISETFTVRKVSYGVGVERTFPVHTPKIAKLEVIRRGKVRRAKLYYLRELRGKAARIKEKTAQ.

Belongs to the bacterial ribosomal protein bL19 family.

In terms of biological role, this protein is located at the 30S-50S ribosomal subunit interface and may play a role in the structure and function of the aminoacyl-tRNA binding site. The protein is Large ribosomal subunit protein bL19 (rplS) of Geobacillus stearothermophilus (Bacillus stearothermophilus).